The primary structure comprises 399 residues: Succinate--CoA ligase [ADP-forming] subunit beta (399 aa).

The 246-residue stretch at 9–254 (KAVLKSFGAP…TTEEDEKEIE (246 aa)) folds into the ATP-grasp domain. ATP contacts are provided by residues Lys-46, 53–55 (GRG), Glu-109, Ala-112, and Glu-117. Mg(2+) is bound by residues Asn-209 and Asp-223. Substrate-binding positions include Asn-274 and 331 to 333 (GIM).

Belongs to the succinate/malate CoA ligase beta subunit family. In terms of assembly, heterotetramer of two alpha and two beta subunits. The cofactor is Mg(2+).

It carries out the reaction succinate + ATP + CoA = succinyl-CoA + ADP + phosphate. It catalyses the reaction GTP + succinate + CoA = succinyl-CoA + GDP + phosphate. Its pathway is carbohydrate metabolism; tricarboxylic acid cycle; succinate from succinyl-CoA (ligase route): step 1/1. Functionally, succinyl-CoA synthetase functions in the citric acid cycle (TCA), coupling the hydrolysis of succinyl-CoA to the synthesis of either ATP or GTP and thus represents the only step of substrate-level phosphorylation in the TCA. The beta subunit provides nucleotide specificity of the enzyme and binds the substrate succinate, while the binding sites for coenzyme A and phosphate are found in the alpha subunit. The sequence is that of Succinate--CoA ligase [ADP-forming] subunit beta from Maricaulis maris (strain MCS10) (Caulobacter maris).